Here is a 659-residue protein sequence, read N- to C-terminus: Homeobox protein slou (659 aa).

Over residues 1–21 the composition is skewed to polar residues; the sequence is MVMLQSPAQKASDSASAQNTA. Disordered stretches follow at residues 1–63, 94–152, 198–298, 316–349, 376–440, and 455–548; these read MVML…PAAK, MSSE…SFSS, AQQH…AAPS, TQAS…PSGR, QIAA…DRDA, and PNKF…PRRA. Low complexity-rich tracts occupy residues 27–51, 95–108, and 120–135; these read SPNS…SVVS, SSES…LSPL, and HNNN…NSNT. Residues 136–152 show a composition bias toward polar residues; that stretch reads RRSQSPPASVGSVSFSS. The span at 201–232 shows a compositional bias: basic residues; the sequence is HMHHHQHQHHQHPAHPHSHQHPHPHPHPHPHP. Tandem repeats lie at residues 221–222, 223–224, 225–226, 227–228, 229–230, 231–232, and 233–234. Residues 221–234 form a 7 X 2 AA tandem repeats of H-P region; sequence HPHPHPHPHPHPHP. Pro residues-rich tracts occupy residues 250–263 and 275–286; these read PPSP…PPTS and PIAPPQNPPHSS. Composition is skewed to low complexity over residues 287 to 298 and 316 to 347; these read QPPQQQQVAAPS and TQAS…GSPS. Acidic residues predominate over residues 388–401; the sequence is SEELNVDGNDEDSN. Over residues 417–435 the composition is skewed to low complexity; sequence RSVNSSAAANPSSASTSAS. 2 stretches are compositionally biased toward acidic residues: residues 478 to 492 and 500 to 519; these read RDEE…DQSE and NDMD…DPSS. Gly residues predominate over residues 528-543; that stretch reads SRNGDGKSGGGGGGGS. Residues 545–604 constitute a DNA-binding region (homeobox); the sequence is PRRARTAFTYEQLVSLENKFKTTRYLSVCERLNLALSLSLTETQVKIWFQNRRTKWKKQN.

It belongs to the NK-1 homeobox family. Mesodermal precursor cells of distinct muscles during embryogenesis, a subset of neuronal cells of the CNS and their precursors and also in cells of a small region of the midgut.

It localises to the nucleus. May play a role in specifying the identity of particular somatic muscles and neurons of the CNS. This Drosophila melanogaster (Fruit fly) protein is Homeobox protein slou (slou).